A 359-amino-acid polypeptide reads, in one-letter code: MARITLRQLLDHAAERSYGVPAFNINNMEQGLAIMEAARACDAPVILQVSRGARSYANDIMLAKMMEALEVMYPDIPLCIHQDHGNNVATCLTAIQHGFTSVMMDGSLKEDAKTPADYAYNAMITTEVSRLAHMVGASVEGELGCLGSLETGHGEAEDGHGFEGALDRSQLLTDPDEAARFVAETGVDALAVAIGTSHGAYKFTRKPTGEVLAMDVIEKIHERLPDTHIVMHGSSSVPQEWQDVFNAHGGEMRETYGVPVEEIVRGIRFGVRKVNIDTDLRLAAAAAFRRVADTSRTEFDPRKFLKPAMDAMSAVCKARFEAFGTAGNASRIKVVPMAEMARRYASGSLKPQAKRAEAA.

Ser50 serves as a coordination point for D-glyceraldehyde 3-phosphate. Asp83 (proton donor) is an active-site residue. Residues His84, Asp105, Glu142, and His198 each coordinate Zn(2+). A dihydroxyacetone phosphate-binding site is contributed by Gly199. Residue His232 participates in Zn(2+) binding. Residues 233–235 (GSS) and 275–278 (NIDT) each bind dihydroxyacetone phosphate.

This sequence belongs to the class II fructose-bisphosphate aldolase family. Homodimer. It depends on Zn(2+) as a cofactor.

It catalyses the reaction beta-D-fructose 1,6-bisphosphate = D-glyceraldehyde 3-phosphate + dihydroxyacetone phosphate. The protein operates within carbohydrate biosynthesis; Calvin cycle. It participates in carbohydrate degradation; glycolysis; D-glyceraldehyde 3-phosphate and glycerone phosphate from D-glucose: step 4/4. Its function is as follows. Catalyzes the aldol condensation of dihydroxyacetone phosphate (DHAP or glycerone-phosphate) with glyceraldehyde 3-phosphate (G3P) to form fructose 1,6-bisphosphate (FBP) in gluconeogenesis and the reverse reaction in glycolysis. The sequence is that of Fructose-bisphosphate aldolase (cbbA) from Sinorhizobium medicae (strain WSM419) (Ensifer medicae).